Consider the following 270-residue polypeptide: Coiled-coil domain-containing protein 3 (270 aa).

An N-terminal signal peptide occupies residues 1–21; it reads MLRQLLLAALCLAGPPAPARA. The N-linked (GlcNAc...) asparagine glycan is linked to N100. Residues 188-251 adopt a coiled-coil conformation; the sequence is SVQKALFEEE…NQKLSEKLAA (64 aa).

In terms of assembly, homodimer. In terms of tissue distribution, expressed in umbilical vein endothelial cells (HUVEC), and at lower levels in aortic smooth muscle cells (HASMC).

It localises to the secreted. In terms of biological role, negatively regulates TNF-alpha-induced pro-inflammatory response in endothelial cells (ECs) via inhibition of TNF-alpha-induced NF-kappaB activation in ECs. Positively regulates lipid accumulation in adipose cells. This chain is Coiled-coil domain-containing protein 3 (CCDC3), found in Homo sapiens (Human).